Here is a 310-residue protein sequence, read N- to C-terminus: MDKIFVDEAVSELHTIQDMLRWAVSRFSAANIWYGHGTDNPWDEAVQLVLPSLYLPLDIPEDMRTARLTSSEKHRIVERVIRRINERIPVAYLTNKAWFCGHEFYVDERVLVPRSPIGELINNHFAGLISQQPKYILDMCTGSGCIAIACAYAFPDAEVDAVDISPDALAVAEHNIEEHGLIHHVTPIRSDLFRDLPKVQYDLIVTNPPYVDAEDMSDLPNEYRHEPELGLASGTDGLKLTRRILGNAPDYLSDDGVLICEVGNSMVHLMEQYPDVPFTWLEFDNGGDGVFMLTKAQLLAAREHFNIYKD.

It belongs to the protein N5-glutamine methyltransferase family. PrmB subfamily.

The enzyme catalyses L-glutaminyl-[ribosomal protein uL3] + S-adenosyl-L-methionine = N(5)-methyl-L-glutaminyl-[ribosomal protein uL3] + S-adenosyl-L-homocysteine + H(+). Specifically methylates large ribosomal subunit protein uL3 on 'Gln-150'. This chain is Ribosomal protein uL3 glutamine methyltransferase, found in Salmonella typhi.